Consider the following 108-residue polypeptide: Transcription initiation factor IIA subunit 2 (108 aa).

This sequence belongs to the TFIIA subunit 2 family. In terms of assembly, TFIIA is a heterodimer of the large unprocessed subunit 1 and a small subunit gamma. It was originally believed to be a heterotrimer of an alpha, a beta and a gamma subunit. Interacts with NCOA6 general coactivator. TFIIA forms a complex with TBP.

The protein resides in the nucleus. TFIIA is a component of the transcription machinery of RNA polymerase II and plays an important role in transcriptional activation. TFIIA in a complex with TBP mediates transcriptional activity. The chain is Transcription initiation factor IIA subunit 2 (gtf2a2) from Oncorhynchus mykiss (Rainbow trout).